A 91-amino-acid polypeptide reads, in one-letter code: Small ribosomal subunit protein uS19 (91 aa).

The protein belongs to the universal ribosomal protein uS19 family.

Protein S19 forms a complex with S13 that binds strongly to the 16S ribosomal RNA. The sequence is that of Small ribosomal subunit protein uS19 from Janthinobacterium sp. (strain Marseille) (Minibacterium massiliensis).